Here is a 339-residue protein sequence, read N- to C-terminus: Small ribosomal subunit biogenesis GTPase RsgA (339 aa).

The region spanning 111 to 271 is the CP-type G domain; it reads MRGLLKPVAA…LIDSPGIREF (161 aa). GTP-binding positions include 159–162 and 213–221; these read NKAD and GQSGVGKSS. Zn(2+)-binding residues include Cys-295, Cys-300, His-302, and Cys-308.

It belongs to the TRAFAC class YlqF/YawG GTPase family. RsgA subfamily. Monomer. Associates with 30S ribosomal subunit, binds 16S rRNA. Zn(2+) is required as a cofactor.

The protein resides in the cytoplasm. In terms of biological role, one of several proteins that assist in the late maturation steps of the functional core of the 30S ribosomal subunit. Helps release RbfA from mature subunits. May play a role in the assembly of ribosomal proteins into the subunit. Circularly permuted GTPase that catalyzes slow GTP hydrolysis, GTPase activity is stimulated by the 30S ribosomal subunit. The chain is Small ribosomal subunit biogenesis GTPase RsgA from Pseudomonas aeruginosa (strain UCBPP-PA14).